Here is a 161-residue protein sequence, read N- to C-terminus: Putative acetyltransferase SAV0762 (161 aa).

This sequence belongs to the transferase hexapeptide repeat family.

This Staphylococcus aureus (strain Mu50 / ATCC 700699) protein is Putative acetyltransferase SAV0762.